The sequence spans 286 residues: Polyamine aminopropyltransferase (286 aa).

Residues 3 to 240 (DLWYSESHAD…GHWLFGFASK (238 aa)) enclose the PABS domain. Gln32 lines the S-methyl-5'-thioadenosine pocket. Spermidine is bound by residues His63 and Asp87. Residues Glu107 and 139-140 (DG) contribute to the S-methyl-5'-thioadenosine site. Asp158 functions as the Proton acceptor in the catalytic mechanism. 158–161 (DSTD) is a binding site for spermidine. S-methyl-5'-thioadenosine is bound at residue Pro165.

It belongs to the spermidine/spermine synthase family. In terms of assembly, homodimer or homotetramer.

It is found in the cytoplasm. It catalyses the reaction S-adenosyl 3-(methylsulfanyl)propylamine + putrescine = S-methyl-5'-thioadenosine + spermidine + H(+). The protein operates within amine and polyamine biosynthesis; spermidine biosynthesis; spermidine from putrescine: step 1/1. Functionally, catalyzes the irreversible transfer of a propylamine group from the amino donor S-adenosylmethioninamine (decarboxy-AdoMet) to putrescine (1,4-diaminobutane) to yield spermidine. The polypeptide is Polyamine aminopropyltransferase (Clostridium acetobutylicum (strain ATCC 824 / DSM 792 / JCM 1419 / IAM 19013 / LMG 5710 / NBRC 13948 / NRRL B-527 / VKM B-1787 / 2291 / W)).